A 156-amino-acid polypeptide reads, in one-letter code: uncharacterized protein (156 aa).

An N-acetyltransferase domain is found at 1 to 145 (MIIRKFSSKD…DAILMIKKKP (145 aa)).

It belongs to the acetyltransferase family.

The protein resides in the cytoplasm. This is an uncharacterized protein from Methanocaldococcus jannaschii (strain ATCC 43067 / DSM 2661 / JAL-1 / JCM 10045 / NBRC 100440) (Methanococcus jannaschii).